Consider the following 129-residue polypeptide: DNA-directed RNA polymerase subunit omega (129 aa).

A disordered region spans residues 76–100 (EVDEPEPEAVPMIASGDSSGGEDSD).

Belongs to the RNA polymerase subunit omega family. As to quaternary structure, the RNAP catalytic core consists of 2 alpha, 1 beta, 1 beta' and 1 omega subunit. When a sigma factor is associated with the core the holoenzyme is formed, which can initiate transcription.

The catalysed reaction is RNA(n) + a ribonucleoside 5'-triphosphate = RNA(n+1) + diphosphate. Promotes RNA polymerase assembly. Latches the N- and C-terminal regions of the beta' subunit thereby facilitating its interaction with the beta and alpha subunits. This is DNA-directed RNA polymerase subunit omega from Xanthobacter autotrophicus (strain ATCC BAA-1158 / Py2).